Here is a 295-residue protein sequence, read N- to C-terminus: Cyclic dipyrimidine nucleotide synthase CdnE (295 aa).

Positions 1-25 are disordered; that stretch reads MSIDWEQTFRKWSKPSSETESTKAE. Glutamine 51, serine 53, and asparagine 59 together coordinate UTP. Residues aspartate 65 and aspartate 67 each coordinate Mg(2+). Residues aspartate 67, aspartate 124, and lysine 125 each contribute to the UTP site. The Mg(2+) site is built by aspartate 128 and aspartate 139. Residues aspartate 139, asparagine 173, lysine 201, and serine 220 each contribute to the UTP site. Residues 274–276 carry the Pyrimidine specificity motif (R/Q)xW in donor pocket motif; it reads QMW.

It belongs to the CD-NTase family. E02 subfamily. Requires Mg(2+) as cofactor.

It carries out the reaction 2 UTP = c-di-UMP + 2 diphosphate. The catalysed reaction is UTP + CTP = cyclic CMP-UMP + 2 diphosphate. In terms of biological role, cyclic nucleotide synthase (second messenger synthase) of a CBASS antivirus system. CBASS (cyclic oligonucleotide-based antiphage signaling system) provides immunity against bacteriophage. The CD-NTase protein synthesizes cyclic nucleotides in response to infection; these serve as specific second messenger signals. The signals activate a diverse range of effectors, leading to bacterial cell death and thus abortive phage infection. A type I-B(UU) CBASS system. Functionally, cyclic dinucleotide synthase that catalyzes the synthesis of 3',3'-cyclic UMP-UMP (c-di-UMP) as the major product, and of 3',3'-cyclic CMP-UMP as a minor product, which are second messengers for cell signal transduction. This chain is Cyclic dipyrimidine nucleotide synthase CdnE, found in Legionella pneumophila.